A 333-amino-acid polypeptide reads, in one-letter code: Ornithine carbamoyltransferase (333 aa).

Carbamoyl phosphate is bound by residues 56–59 (STRT), Gln83, Arg107, and 134–137 (HPTQ). L-ornithine contacts are provided by residues Asn167, Asp231, and 235–236 (SM). Carbamoyl phosphate contacts are provided by residues 273-274 (CL) and Arg318.

This sequence belongs to the aspartate/ornithine carbamoyltransferase superfamily. OTCase family.

It localises to the cytoplasm. The enzyme catalyses carbamoyl phosphate + L-ornithine = L-citrulline + phosphate + H(+). The protein operates within amino-acid biosynthesis; L-arginine biosynthesis; L-arginine from L-ornithine and carbamoyl phosphate: step 1/3. Its function is as follows. Reversibly catalyzes the transfer of the carbamoyl group from carbamoyl phosphate (CP) to the N(epsilon) atom of ornithine (ORN) to produce L-citrulline. The protein is Ornithine carbamoyltransferase of Staphylococcus aureus (strain MSSA476).